Consider the following 563-residue polypeptide: Arginine--tRNA ligase (563 aa).

Positions 120–130 (PNIAKPFHIGH) match the 'HIGH' region motif.

The protein belongs to the class-I aminoacyl-tRNA synthetase family. Monomer.

It localises to the cytoplasm. The enzyme catalyses tRNA(Arg) + L-arginine + ATP = L-arginyl-tRNA(Arg) + AMP + diphosphate. This chain is Arginine--tRNA ligase, found in Clostridium botulinum (strain 657 / Type Ba4).